The chain runs to 610 residues: Modifier of mdg4 (610 aa).

Residues 1–160 (MADDEQFSLC…QQPRASARYK (160 aa)) form a self-association region. Positions 1–308 (MADDEQFSLC…EEAEYIDLPM (308 aa)) are interaction with Chi. The BTB domain maps to 32-98 (VDVSLAAEGQ…MYCGEVNVKQ (67 aa)). Disordered stretches follow at residues 115-156 (GLTD…PRAS), 219-259 (VSTN…DSTT), 311-339 (PTKS…DDTY), and 386-432 (ESSF…PKPK). Over residues 122-135 (APQPPQESSPPPAA) the composition is skewed to pro residues. Residues 136–156 (PHVQQQQIPAQRVQRQQPRAS) show a composition bias toward low complexity. Over residues 222 to 238 (NKRSAQRSSLTPASSSA) the composition is skewed to polar residues. Position 230 is a phosphoserine (S230). Over residues 312–325 (TKSEPDYSEDHGDA) the composition is skewed to basic and acidic residues. A compositionally biased stretch (polar residues) spans 386-400 (ESSFVDTSGDQGNTE). Residues 401–410 (AQAATSASAT) show a composition bias toward low complexity. The span at 422 to 432 (TKVEDQTPKPK) shows a compositional bias: basic and acidic residues. The segment at 452–512 (YASTTKGGVK…VFPYEGEHVH (61 aa)) adopts an FLYWCH-type zinc-finger fold. The segment at 551–610 (LEEADDKEDEDFEEFEIQEIDEIELDEPEKTPAKEEEVDPNDFREKIKRRLQKALQNKKK) is interaction with su(Hw). A compositionally biased stretch (acidic residues) spans 567-577 (IQEIDEIELDE). The tract at residues 567-595 (IQEIDEIELDEPEKTPAKEEEVDPNDFRE) is disordered. The segment covering 578 to 595 (PEKTPAKEEEVDPNDFRE) has biased composition (basic and acidic residues).

As to quaternary structure, can self-associate. Interacts with Chi. Interacts with Top2. Isoform mod2.2: Component of the gypsy chromatin insulator complex, composed of Cp190, mod(mdg4) and su(Hw). The gypsy chromatin insulator complex interacts with Topors via mod(mdg4) and su(Hw). Isoform mod2.2 interacts with Trl/GAGA and interaction with this protein may bypass the repressive effects of the su(Hw) insulator.

The protein resides in the nucleus. The protein localises to the chromosome. Component of the gypsy chromatin insulator complex which is required for the function of the gypsy chromatin insulator and other endogenous chromatin insulators. Chromatin insulators are regulatory elements which establish independent domains of transcriptional activity within eukaryotic genomes. Insulators have two defining properties; they can block the communication between an enhancer and a promoter when placed between them and can also buffer transgenes from position effect variegation (PEV). Insulators are proposed to structure the chromatin fiber into independent domains of differing transcriptional potential by promoting the formation of distinct chromatin loops. This chromatin looping may involve the formation of insulator bodies, where homotypic interactions between individual subunits of the insulator complex could promote the clustering of widely spaced insulators at the nuclear periphery. Within the gypsy insulator complex, this protein may control the nature of the repressive effect of su(Hw): in the absence of mod(mdg4) protein, su(Hw) exerts a bidirectional silencing effect, whereas in the presence of mod(mdg4), the silencing effect is unidirectional. Isoform H is specifically required to maintain the pairing of achiasmate homologs in male meiosis I which is mediated by the rDNA repeats on the achiasmate X-Y bivalents. Isoform H also plays a role in apoptotic regulatory pathways. This chain is Modifier of mdg4, found in Drosophila melanogaster (Fruit fly).